We begin with the raw amino-acid sequence, 522 residues long: MKSFNELVGKLSDPASRQALKSMQRGIEREALRIEKSGHLALDKHPKALGSALTHSRITTDYSESLLEFITPVFADIDELVEDLTLTHAYSVRHLNGQRLWPVSMPCYLGDGADIPIADYGSSNSGQMKSLYRKGLTYRYGAQMQIISGVHFNFSVSDKLWHRLYELSDKSLSLDDFISDSYFGLIRNYRRLVWVLPYLFGASPALCSTFIQDPKTSNFPFEVIGDGTLFMPYATSLRMSDLGYTNQEQDNLNISYNSLTDYLTGMQAAINMPSANFAKIGVKVDGEYRQLNDNILQIENEFYSPIRAKRVAKGSEKPSESLARAGVEYIEVRALDVNPYSAVGIEKSQIRFLDLFLLNCLLQPSAPSDATEEAEIAENLQAVVLEGRKPGLLLKRSGQELSLTHWLESLFGNLKQIAQLLDDEGQDDYQVALAKWHKAVENPNETLSGKIMAGLKDEQVDHSEWVMELAEQYHQQLKAYPLTENVDKRYQQDAVESLEKQAYLESQPSVSFDQFLVDYFKV.

Belongs to the glutamate--cysteine ligase type 1 family. Type 1 subfamily.

It carries out the reaction L-cysteine + L-glutamate + ATP = gamma-L-glutamyl-L-cysteine + ADP + phosphate + H(+). It functions in the pathway sulfur metabolism; glutathione biosynthesis; glutathione from L-cysteine and L-glutamate: step 1/2. This is Glutamate--cysteine ligase from Shewanella pealeana (strain ATCC 700345 / ANG-SQ1).